Reading from the N-terminus, the 423-residue chain is Adenylosuccinate synthetase (423 aa).

Residues 12–18 and 40–42 contribute to the GTP site; these read GDEGKGK and GHT. Residue Asp13 is the Proton acceptor of the active site. Mg(2+) contacts are provided by Asp13 and Gly40. IMP contacts are provided by residues 13-16, 38-41, Thr128, Arg142, Gln223, Thr238, and Arg302; these read DEGK and NAGH. His41 (proton donor) is an active-site residue. 298-304 serves as a coordination point for substrate; the sequence is TTTGRPR. Residues Arg304, 330-332, and 412-414 each bind GTP; these read RLD and CIG.

The protein belongs to the adenylosuccinate synthetase family. In terms of assembly, homodimer. The cofactor is Mg(2+).

It localises to the cytoplasm. The enzyme catalyses IMP + L-aspartate + GTP = N(6)-(1,2-dicarboxyethyl)-AMP + GDP + phosphate + 2 H(+). Its pathway is purine metabolism; AMP biosynthesis via de novo pathway; AMP from IMP: step 1/2. Plays an important role in the de novo pathway of purine nucleotide biosynthesis. Catalyzes the first committed step in the biosynthesis of AMP from IMP. The chain is Adenylosuccinate synthetase from Dehalococcoides mccartyi (strain ATCC BAA-2100 / JCM 16839 / KCTC 5957 / BAV1).